A 136-amino-acid chain; its full sequence is Large ribosomal subunit protein uL16c (136 aa).

The protein belongs to the universal ribosomal protein uL16 family. Part of the 50S ribosomal subunit.

It is found in the plastid. Its subcellular location is the chloroplast. The chain is Large ribosomal subunit protein uL16c from Illicium oligandrum (Star anise).